Consider the following 300-residue polypeptide: Protein Bel-1 (300 aa).

Disordered stretches follow at residues 1–20 (MDSY…QDLQ), 26–50 (VGPE…RRPR), and 185–237 (KPST…GDTV). A compositionally biased stretch (polar residues) spans 11–20 (ASTSGLQDLQ). The DNA-binding element occupies 89–200 (SKSICKRLIL…PEGPKPRRRH (112 aa)). Positions 201-210 (DPVLRCDMFE) are enriched in basic and acidic residues. Residues 211 to 222 (KHHKPRPKRSRK) show a composition bias toward basic residues. Positions 214-223 (KPRPKRSRKR) match the Nuclear localization signal motif. Positions 224–300 (SIDHESCASS…PSGSGEHSVL (77 aa)) are transactivation domain.

In terms of assembly, homodimer or homomultimer. Forms complexes with the host nuclear factors NFIA, NFIB, NFIC or NFIX.

Its subcellular location is the host nucleus. Its function is as follows. Transcriptional transactivator that activates the viral internal promoter (IP), thereby enhancing its own expression. This transactivation is repressed by nuclear factor I. Also transactivates the long terminal repeat (LTR) promoter, thereby inducing structural gene expression, initiating the late phase of infection. It is therefore a key regulator of viral gene expression. It directly binds to and activates DNA target sites of viral promoters and those of distinct cellular genes. Required for viral replication. In Pan troglodytes (Chimpanzee), this protein is Protein Bel-1 (bel1).